The primary structure comprises 805 residues: FAD-dependent monooxygenase verC1 (805 aa).

Positions 1–20 are cleaved as a signal peptide; the sequence is MTFRVIIVGGGVAGLTLASA. Residues Glu-32, Ala-46, and Arg-107 each contribute to the FAD site. Asn-132 carries an N-linked (GlcNAc...) asparagine glycan. Tyr-214 is a catalytic residue. Residues Asp-306 and Ala-319 each contribute to the FAD site. The next 7 helical transmembrane spans lie at 551-571, 604-624, 632-652, 671-691, 703-723, 726-746, and 761-781; these read ALTMAQIPTLFTFYGQMAGLG, IAVLPAIIVSYYIPLSAAFFW, SWLFVWQMHPIWTAITLYLFS, LPVIKFSMTVLVIGAAGFWMW, VFFPTAVPSTQAPFAACVCAI, WDMLSTFGSTFLWLGYLIWDL, and IYGVAAFVALGPGAAIGLGWL.

It belongs to the paxM FAD-dependent monooxygenase family.

Its subcellular location is the membrane. The protein operates within secondary metabolite biosynthesis; terpenoid biosynthesis. It functions in the pathway mycotoxin biosynthesis. In terms of biological role, FAD-dependent monooxygenase; part of the gene cluster that mediates the biosynthesis of the neurotoxin verrucosidin, a methylated alpha-pyrone polyketide that inhibits oxidative phosphorylation in mitochondria and thereby causes neurological diseases. The carbon backbone of verrucosidin is synthesized by the HR-PKS verA, and further modified by the other verrucodidin cluster enzymes. The sequence is that of FAD-dependent monooxygenase verC1 from Penicillium polonicum.